The chain runs to 188 residues: Small ribosomal subunit protein uS7 (188 aa).

It belongs to the universal ribosomal protein uS7 family. Part of the 30S ribosomal subunit.

One of the primary rRNA binding proteins, it binds directly to 16S rRNA where it nucleates assembly of the head domain of the 30S subunit. Is located at the subunit interface close to the decoding center. The protein is Small ribosomal subunit protein uS7 of Methanococcus maripaludis (strain C7 / ATCC BAA-1331).